The sequence spans 693 residues: Elongation factor G (693 aa).

The tr-type G domain occupies 8-282; that stretch reads EKTRNIGIMA…AVIDYLPSPL (275 aa). Residues 17-24, 81-85, and 135-138 contribute to the GTP site; these read AHVDAGKT, DTPGH, and NKMD.

It belongs to the TRAFAC class translation factor GTPase superfamily. Classic translation factor GTPase family. EF-G/EF-2 subfamily.

The protein resides in the cytoplasm. Catalyzes the GTP-dependent ribosomal translocation step during translation elongation. During this step, the ribosome changes from the pre-translocational (PRE) to the post-translocational (POST) state as the newly formed A-site-bound peptidyl-tRNA and P-site-bound deacylated tRNA move to the P and E sites, respectively. Catalyzes the coordinated movement of the two tRNA molecules, the mRNA and conformational changes in the ribosome. The sequence is that of Elongation factor G from Streptococcus pneumoniae (strain CGSP14).